The chain runs to 259 residues: Zinc import ATP-binding protein ZnuC (259 aa).

The ABC transporter domain maps to 11–225 (IRLENIYVHR…PEYLAIFGGQ (215 aa)). 43-50 (GPNGAGKS) is an ATP binding site.

Belongs to the ABC transporter superfamily. Zinc importer (TC 3.A.1.15.5) family. In terms of assembly, the complex is composed of two ATP-binding proteins (ZnuC), two transmembrane proteins (ZnuB) and a solute-binding protein (ZnuA).

The protein resides in the cell inner membrane. The enzyme catalyses Zn(2+)(out) + ATP(in) + H2O(in) = Zn(2+)(in) + ADP(in) + phosphate(in) + H(+)(in). In terms of biological role, part of the ABC transporter complex ZnuABC involved in zinc import. Responsible for energy coupling to the transport system. The polypeptide is Zinc import ATP-binding protein ZnuC (Acinetobacter baylyi (strain ATCC 33305 / BD413 / ADP1)).